The sequence spans 546 residues: Fusion glycoprotein F0 (546 aa).

A signal peptide spans Met-1 to Gly-19. The Extracellular portion of the chain corresponds to Gln-20 to Thr-491. N-linked (GlcNAc...) asparagine; by host glycosylation is found at Asn-25, Asn-57, and Asn-63. Residues Phe-109–Leu-133 form a fusion peptide region. Residues His-134 to Gln-162 adopt a coiled-coil conformation. 4 disulfide bridges follow: Cys-330/Cys-339, Cys-354/Cys-362, Cys-386/Cys-391, and Cys-393/Cys-416. Residues Asn-458–Ile-483 are a coiled coil. The chain crosses the membrane as a helical span at residues Gly-492–Cys-512. At Cys-513–Leu-546 the chain is on the cytoplasmic side.

It belongs to the paramyxoviruses fusion glycoprotein family. As to quaternary structure, homotrimer of disulfide-linked F1-F2. The inactive precursor F0 is glycosylated and proteolytically cleaved into F1 and F2 to be functionally active. The cleavage is mediated by cellular proteases during the transport and maturation of the polypeptide.

It is found in the virion membrane. The protein localises to the host cell membrane. In terms of biological role, class I viral fusion protein. Under the current model, the protein has at least 3 conformational states: pre-fusion native state, pre-hairpin intermediate state, and post-fusion hairpin state. During viral and plasma cell membrane fusion, the heptad repeat (HR) regions assume a trimer-of-hairpins structure, positioning the fusion peptide in close proximity to the C-terminal region of the ectodomain. The formation of this structure appears to drive apposition and subsequent fusion of viral and plasma cell membranes. Directs fusion of viral and cellular membranes leading to delivery of the nucleocapsid into the cytoplasm. This fusion is pH independent and occurs directly at the outer cell membrane. The trimer of F1-F2 (F protein) probably interacts with HN at the virion surface. Upon HN binding to its cellular receptor, the hydrophobic fusion peptide is unmasked and interacts with the cellular membrane, inducing the fusion between cell and virion membranes. Later in infection, F proteins expressed at the plasma membrane of infected cells could mediate fusion with adjacent cells to form syncytia, a cytopathic effect that could lead to tissue necrosis. This is Fusion glycoprotein F0 (F) from Bos indicus (Zebu).